The following is a 208-amino-acid chain: Urease accessory protein UreG (208 aa).

10-17 is a binding site for GTP; the sequence is GPVGSGKT.

The protein belongs to the SIMIBI class G3E GTPase family. UreG subfamily. Homodimer. UreD, UreF and UreG form a complex that acts as a GTP-hydrolysis-dependent molecular chaperone, activating the urease apoprotein by helping to assemble the nickel containing metallocenter of UreC. The UreE protein probably delivers the nickel.

The protein localises to the cytoplasm. Functionally, facilitates the functional incorporation of the urease nickel metallocenter. This process requires GTP hydrolysis, probably effectuated by UreG. In Halalkalibacterium halodurans (strain ATCC BAA-125 / DSM 18197 / FERM 7344 / JCM 9153 / C-125) (Bacillus halodurans), this protein is Urease accessory protein UreG.